The sequence spans 184 residues: Ribosome maturation factor RimM (184 aa).

Residues 112–184 (TDSYYWIDLI…SNKTISLDWQ (73 aa)) enclose the PRC barrel domain.

Belongs to the RimM family. Binds ribosomal protein uS19.

It is found in the cytoplasm. An accessory protein needed during the final step in the assembly of 30S ribosomal subunit, possibly for assembly of the head region. Essential for efficient processing of 16S rRNA. May be needed both before and after RbfA during the maturation of 16S rRNA. It has affinity for free ribosomal 30S subunits but not for 70S ribosomes. The polypeptide is Ribosome maturation factor RimM (Polynucleobacter necessarius subsp. necessarius (strain STIR1)).